The chain runs to 225 residues: Uracil-DNA glycosylase (225 aa).

Asp65 (proton acceptor) is an active-site residue.

Belongs to the uracil-DNA glycosylase (UDG) superfamily. UNG family.

The protein resides in the cytoplasm. It carries out the reaction Hydrolyzes single-stranded DNA or mismatched double-stranded DNA and polynucleotides, releasing free uracil.. Functionally, excises uracil residues from the DNA which can arise as a result of misincorporation of dUMP residues by DNA polymerase or due to deamination of cytosine. The chain is Uracil-DNA glycosylase from Clostridium botulinum (strain Alaska E43 / Type E3).